The primary structure comprises 237 residues: Demethylmenaquinone methyltransferase (237 aa).

Residues T58, D79, and 106 to 107 (NA) each bind S-adenosyl-L-methionine.

This sequence belongs to the class I-like SAM-binding methyltransferase superfamily. MenG/UbiE family.

It catalyses the reaction a 2-demethylmenaquinol + S-adenosyl-L-methionine = a menaquinol + S-adenosyl-L-homocysteine + H(+). It participates in quinol/quinone metabolism; menaquinone biosynthesis; menaquinol from 1,4-dihydroxy-2-naphthoate: step 2/2. In terms of biological role, methyltransferase required for the conversion of demethylmenaquinol (DMKH2) to menaquinol (MKH2). This is Demethylmenaquinone methyltransferase from Bacillus cereus (strain ATCC 10987 / NRS 248).